The primary structure comprises 378 residues: Glutamate 5-kinase (378 aa).

ATP is bound at residue Lys-17. Residues Ser-58, Asp-145, and Asn-157 each coordinate substrate. Residues 177–178 and 221–227 each bind ATP; these read TD and TGGMMTK. One can recognise a PUA domain in the interval 286 to 364; the sequence is VGKLYLDSGA…KEIPTILGYV (79 aa).

The protein belongs to the glutamate 5-kinase family.

The protein resides in the cytoplasm. It catalyses the reaction L-glutamate + ATP = L-glutamyl 5-phosphate + ADP. Its pathway is amino-acid biosynthesis; L-proline biosynthesis; L-glutamate 5-semialdehyde from L-glutamate: step 1/2. Its function is as follows. Catalyzes the transfer of a phosphate group to glutamate to form L-glutamate 5-phosphate. In Nostoc sp. (strain PCC 7120 / SAG 25.82 / UTEX 2576), this protein is Glutamate 5-kinase.